A 199-amino-acid chain; its full sequence is Large ribosomal subunit protein bL9 (199 aa).

The segment at 153 to 199 (KPVKASEKKGRRPRRDEEASDEQILAEENSVTEEAVSEEIQNSESEN) is disordered.

This sequence belongs to the bacterial ribosomal protein bL9 family.

Its function is as follows. Binds to the 23S rRNA. The sequence is that of Large ribosomal subunit protein bL9 from Treponema denticola (strain ATCC 35405 / DSM 14222 / CIP 103919 / JCM 8153 / KCTC 15104).